A 244-amino-acid chain; its full sequence is MEVTGLSAPTVNVFISSSLNSFRSQKRYSRSLTVAEFKCKLQLVVGSPASCMELELYGPDDKFCCKLDQDDALLGSYPVDDGCRIHVIDHSGARLGEYEDISKVEKYEISQEAYEQRQDSIRSFLKRNKLGRFNEEERAQQEAENSQRLIEEEAQASTIPVGSRCEVRTPGQPPRRGTVMYVGLTDFKPGYWIGIRYDEPLGKNDGSVNGKRYFECQAKYGAFVKPSVVTVGDFPEEDYGLDEM.

M1 is subject to N-acetylmethionine. Y98 is subject to Phosphotyrosine. S110 is modified (phosphoserine). The CAP-Gly domain occupies 183–225 (GLTDFKPGYWIGIRYDEPLGKNDGSVNGKRYFECQAKYGAFVK). K219 bears the N6-acetyllysine mark.

Belongs to the TBCB family. In terms of assembly, supercomplex made of cofactors A to E. Cofactors A and D function by capturing and stabilizing tubulin in a quasi-native conformation. Cofactor E binds to the cofactor D-tubulin complex; interaction with cofactor C then causes the release of tubulin polypeptides that are committed to the native state. Cofactors B and E can form a heterodimer which binds to alpha-tubulin and enhances their ability to dissociate tubulin heterodimers. Interacts with GAN. Interacts with DCTN1. In terms of processing, ubiquitinated in the presence of GAN which targets it for degradation by the proteasome. Phosphorylation by PAK1 is required for normal function.

Its subcellular location is the cytoplasm. It is found in the cytoskeleton. Its function is as follows. Binds to alpha-tubulin folding intermediates after their interaction with cytosolic chaperonin in the pathway leading from newly synthesized tubulin to properly folded heterodimer. Involved in regulation of tubulin heterodimer dissociation. May function as a negative regulator of axonal growth. This Bos taurus (Bovine) protein is Tubulin-folding cofactor B (TBCB).